Consider the following 254-residue polypeptide: 4-hydroxy-tetrahydrodipicolinate reductase (254 aa).

NAD(+) is bound by residues 8-13 (GASGKM), 87-89 (GTT), and 111-114 (ATNM). Catalysis depends on histidine 143, which acts as the Proton donor/acceptor. Histidine 144 lines the (S)-2,3,4,5-tetrahydrodipicolinate pocket. Lysine 147 (proton donor) is an active-site residue. 153 to 154 (GT) provides a ligand contact to (S)-2,3,4,5-tetrahydrodipicolinate.

Belongs to the DapB family.

The protein localises to the cytoplasm. It catalyses the reaction (S)-2,3,4,5-tetrahydrodipicolinate + NAD(+) + H2O = (2S,4S)-4-hydroxy-2,3,4,5-tetrahydrodipicolinate + NADH + H(+). The catalysed reaction is (S)-2,3,4,5-tetrahydrodipicolinate + NADP(+) + H2O = (2S,4S)-4-hydroxy-2,3,4,5-tetrahydrodipicolinate + NADPH + H(+). The protein operates within amino-acid biosynthesis; L-lysine biosynthesis via DAP pathway; (S)-tetrahydrodipicolinate from L-aspartate: step 4/4. Its function is as follows. Catalyzes the conversion of 4-hydroxy-tetrahydrodipicolinate (HTPA) to tetrahydrodipicolinate. The chain is 4-hydroxy-tetrahydrodipicolinate reductase from Campylobacter fetus subsp. fetus (strain 82-40).